The following is a 94-amino-acid chain: Putative pterin-4-alpha-carbinolamine dehydratase (94 aa).

It belongs to the pterin-4-alpha-carbinolamine dehydratase family.

It catalyses the reaction (4aS,6R)-4a-hydroxy-L-erythro-5,6,7,8-tetrahydrobiopterin = (6R)-L-erythro-6,7-dihydrobiopterin + H2O. This chain is Putative pterin-4-alpha-carbinolamine dehydratase, found in Mycobacterium sp. (strain KMS).